Reading from the N-terminus, the 760-residue chain is Probable myosin-binding protein 4 (760 aa).

Residues 26–46 (WFLILLMFIDALLSYLLVWFA) traverse the membrane as a helical segment. 4 disordered regions span residues 161–189 (SRGRNSSSKPNIPAPRHLTRRGSGGSLKK), 247–273 (SEKRTHKSRRRKSFDDKKMSNHKQPVL), 292–311 (SMLGYNLENRTRQKQPVKAK), and 348–595 (EAEV…KHSA). Over residues 352–366 (SGSSSPSGGEFLSPS) the composition is skewed to low complexity. The segment covering 371 to 383 (ASREIRIQEHDDS) has biased composition (basic and acidic residues). A compositionally biased stretch (polar residues) spans 385–394 (DFSQNITSSA). Residues 388 to 416 (QNITSSAMEIEEFEAAIEQKESDHMDVSG) adopt a coiled-coil conformation. Basic and acidic residues predominate over residues 404-413 (IEQKESDHMD). 2 stretches are compositionally biased toward acidic residues: residues 446-458 (LEQEQSGEEESEV) and 517-526 (EEDVDNEESE). Basic and acidic residues-rich tracts occupy residues 537-550 (VKEEHSAKEEHGDH) and 562-580 (SKEEPSLEHSDKDSLKITE). A GTD-binding domain is found at 611–709 (SLVEVLKQQL…DLEMELEYYR (99 aa)). The segment at 725–760 (GILGNTEETNVTSPTDETSIKDSTDTKLTGSPSAEN) is disordered. Polar residues-rich tracts occupy residues 730–741 (TEETNVTSPTDE) and 750–760 (TKLTGSPSAEN).

Its subcellular location is the endomembrane system. In terms of biological role, membrane-anchored myosin receptors that define a distinct, plant-specific transport vesicle compartment. This Arabidopsis thaliana (Mouse-ear cress) protein is Probable myosin-binding protein 4.